A 346-amino-acid chain; its full sequence is uncharacterized protein (346 aa).

This is an uncharacterized protein from Mycoplasma genitalium (strain ATCC 33530 / DSM 19775 / NCTC 10195 / G37) (Mycoplasmoides genitalium).